Reading from the N-terminus, the 446-residue chain is Exodeoxyribonuclease 7 large subunit (446 aa).

It belongs to the XseA family. Heterooligomer composed of large and small subunits.

The protein localises to the cytoplasm. The catalysed reaction is Exonucleolytic cleavage in either 5'- to 3'- or 3'- to 5'-direction to yield nucleoside 5'-phosphates.. Its function is as follows. Bidirectionally degrades single-stranded DNA into large acid-insoluble oligonucleotides, which are then degraded further into small acid-soluble oligonucleotides. The sequence is that of Exodeoxyribonuclease 7 large subunit from Shewanella denitrificans (strain OS217 / ATCC BAA-1090 / DSM 15013).